Consider the following 573-residue polypeptide: Urease subunit alpha (573 aa).

The Urease domain occupies 136–573; the sequence is GAIDCHVHLI…LPMAQRYFLF (438 aa). 3 residues coordinate Ni(2+): His-141, His-143, and Lys-224. Position 224 is an N6-carboxylysine (Lys-224). His-226 is a binding site for substrate. Ni(2+) contacts are provided by His-253 and His-279. The Proton donor role is filled by His-327. Residue Asp-367 coordinates Ni(2+).

This sequence belongs to the metallo-dependent hydrolases superfamily. Urease alpha subunit family. Heterotrimer of UreA (gamma), UreB (beta) and UreC (alpha) subunits. Three heterotrimers associate to form the active enzyme. The cofactor is Ni cation. Carboxylation allows a single lysine to coordinate two nickel ions.

Its subcellular location is the cytoplasm. The catalysed reaction is urea + 2 H2O + H(+) = hydrogencarbonate + 2 NH4(+). It participates in nitrogen metabolism; urea degradation; CO(2) and NH(3) from urea (urease route): step 1/1. In Mycobacterium sp. (strain JLS), this protein is Urease subunit alpha.